The following is a 274-amino-acid chain: 3-methyl-2-oxobutanoate hydroxymethyltransferase (274 aa).

Residues Asp-54 and Asp-93 each contribute to the Mg(2+) site. Residues 54–55 (DS), Asp-93, and Lys-121 each bind 3-methyl-2-oxobutanoate. Glu-123 provides a ligand contact to Mg(2+). Glu-190 (proton acceptor) is an active-site residue.

This sequence belongs to the PanB family. Homodecamer; pentamer of dimers. Requires Mg(2+) as cofactor.

Its subcellular location is the cytoplasm. It catalyses the reaction 3-methyl-2-oxobutanoate + (6R)-5,10-methylene-5,6,7,8-tetrahydrofolate + H2O = 2-dehydropantoate + (6S)-5,6,7,8-tetrahydrofolate. The protein operates within cofactor biosynthesis; (R)-pantothenate biosynthesis; (R)-pantoate from 3-methyl-2-oxobutanoate: step 1/2. Its function is as follows. Catalyzes the reversible reaction in which hydroxymethyl group from 5,10-methylenetetrahydrofolate is transferred onto alpha-ketoisovalerate to form ketopantoate. In Ralstonia nicotianae (strain ATCC BAA-1114 / GMI1000) (Ralstonia solanacearum), this protein is 3-methyl-2-oxobutanoate hydroxymethyltransferase.